Reading from the N-terminus, the 217-residue chain is Probable transaldolase (217 aa).

The Schiff-base intermediate with substrate role is filled by K83.

It belongs to the transaldolase family. Type 3B subfamily.

Its subcellular location is the cytoplasm. The enzyme catalyses D-sedoheptulose 7-phosphate + D-glyceraldehyde 3-phosphate = D-erythrose 4-phosphate + beta-D-fructose 6-phosphate. Its pathway is carbohydrate degradation; pentose phosphate pathway; D-glyceraldehyde 3-phosphate and beta-D-fructose 6-phosphate from D-ribose 5-phosphate and D-xylulose 5-phosphate (non-oxidative stage): step 2/3. Functionally, transaldolase is important for the balance of metabolites in the pentose-phosphate pathway. The protein is Probable transaldolase of Hydrogenobaculum sp. (strain Y04AAS1).